An 874-amino-acid polypeptide reads, in one-letter code: UPF0182 protein Sfum_2137 (874 aa).

The next 7 membrane-spanning stretches (helical) occupy residues 7-27, 57-77, 110-130, 171-191, 208-228, 252-272, and 283-303; these read WPLI…LSSL, IVFG…FWVA, SLWV…LPIF, RRLL…YLLE, LHLS…YVLQ, VIWA…FSMI, and PLVV…SAFL.

Belongs to the UPF0182 family.

It localises to the cell membrane. The chain is UPF0182 protein Sfum_2137 from Syntrophobacter fumaroxidans (strain DSM 10017 / MPOB).